Reading from the N-terminus, the 545-residue chain is EH domain-containing protein 1 (545 aa).

EF-hand domains are found at residues 14 to 49 (ENQM…SNLP) and 50 to 83 (RPEL…VSLA). The EH domain maps to 15-93 (NQMIYKEWFE…QTGHEISHEV (79 aa)). Asp27, Asp29, Asp31, Arg33, Asp38, Asp61, Tyr67, and Glu72 together coordinate Ca(2+). The region spanning 194-429 (FDAKPMVMLL…DLLADLKDIP (236 aa)) is the Dynamin-type G domain. The interval 204–211 (GQYSTGKT) is G1 motif. A GTP-binding site is contributed by 204–211 (GQYSTGKT). Positions 230–231 (EP) are G2 motif. The G3 motif stretch occupies residues 292–295 (DTPG). GTP contacts are provided by residues 309-313 (DFTGV) and Lys359. The G4 motif stretch occupies residues 358 to 361 (NKAD). A region of interest (G5 motif) is located at residue Val382. GTP is bound at residue 395–398 (SFSD). Residues 467-490 (KAKAQQKLIDNLEDEFGKVQREHH) are a coiled coil.

Belongs to the TRAFAC class dynamin-like GTPase superfamily. Dynamin/Fzo/YdjA family. EHD subfamily. As to quaternary structure, homooligomer, and heterooligomer with EHD2.

The protein resides in the endosome membrane. The protein localises to the cell membrane. Its subcellular location is the cytoplasm. It catalyses the reaction GTP + H2O = GDP + phosphate + H(+). Its function is as follows. Involved in endocytosis positive regulation. Acts in early endocytic membrane fusion and membrane trafficking of recycling endosomes. Confers salt tolerance. This chain is EH domain-containing protein 1, found in Arabidopsis thaliana (Mouse-ear cress).